Reading from the N-terminus, the 289-residue chain is BTB/POZ domain-containing protein KCTD7 (289 aa).

Polar residues predominate over residues 1 to 10 (MVVVTGQSKG). Positions 1–35 (MVVVTGQSKGSGDPDEAMSSSDAEDDFQEPATPTA) are disordered. Positions 51–149 (EVVPLNVGGM…HLEDVQPLKG (99 aa)) constitute a BTB domain.

The protein resides in the cell membrane. It is found in the cytoplasm. It localises to the cytosol. Functionally, may be involved in the control of excitability of cortical neurons. The chain is BTB/POZ domain-containing protein KCTD7 (KCTD7) from Gallus gallus (Chicken).